Reading from the N-terminus, the 300-residue chain is Delta(7)-sterol 5(6)-desaturase erg31 (300 aa).

3 helical membrane passes run 33–53 (ISLFFLTWFGGMFLYLTFASL), 78–98 (VLTALQNLPGMALLTVPWFLA), and 117–137 (YFLCSLPLFVMFSDFGIYWAH). Positions 123-248 (PLFVMFSDFG…FTTLFDRLGN (126 aa)) constitute a Fatty acid hydroxylase domain. The short motif at 137–141 (HRFLH) is the Histidine box-1 element. Residues 150–154 (HKLHH) carry the Histidine box-2 motif. Residues 180–200 (HLFPFFFPLHKLTYLALFTFV) traverse the membrane as a helical segment. A Histidine box-3 motif is present at residues 225 to 229 (HNGHH).

It belongs to the sterol desaturase family. Fe cation is required as a cofactor.

The protein resides in the endoplasmic reticulum membrane. The catalysed reaction is episterol + 2 Fe(II)-[cytochrome b5] + O2 + 2 H(+) = 5-dehydroepisterol + 2 Fe(III)-[cytochrome b5] + 2 H2O. It functions in the pathway steroid metabolism; ergosterol biosynthesis. C-5 sterol desaturase; part of the third module of ergosterol biosynthesis pathway that includes by the late steps of the pathway. Erg31 and erg32 catalyze the introduction of a C-5 double bond in the B ring to produce 5-dehydroepisterol. The third module or late pathway involves the ergosterol synthesis itself through consecutive reactions that mainly occur in the endoplasmic reticulum (ER) membrane. Firstly, the squalene synthase erg9 catalyzes the condensation of 2 farnesyl pyrophosphate moieties to form squalene, which is the precursor of all steroids. Secondly, squalene is converted into lanosterol by the consecutive action of the squalene epoxidase erg1 and the lanosterol synthase erg7. The lanosterol 14-alpha-demethylase erg11/cyp1 catalyzes C14-demethylation of lanosterol to produce 4,4'-dimethyl cholesta-8,14,24-triene-3-beta-ol. In the next steps, a complex process involving various demethylation, reduction and desaturation reactions catalyzed by the C-14 reductase erg24 and the C-4 demethylation complex erg25-erg26-erg27 leads to the production of zymosterol. Erg28 likely functions in the C-4 demethylation complex reaction by tethering erg26 and Erg27 to the endoplasmic reticulum or to facilitate interaction between these proteins. Then, the sterol 24-C-methyltransferase erg6 catalyzes the methyl transfer from S-adenosyl-methionine to the C-24 of zymosterol to form fecosterol. The C-8 sterol isomerase erg2 catalyzes the reaction which results in unsaturation at C-7 in the B ring of sterols and thus converts fecosterol to episterol. The sterol-C5-desaturases erg31 and erg32 then catalyze the introduction of a C-5 double bond in the B ring to produce 5-dehydroepisterol. The C-22 sterol desaturase erg5 further converts 5-dehydroepisterol into ergosta-5,7,22,24(28)-tetraen-3beta-ol by forming the C-22(23) double bond in the sterol side chain. Finally, ergosta-5,7,22,24(28)-tetraen-3beta-ol is substrate of the C-24(28) sterol reductase erg4 to produce ergosterol. In the genus Schizosaccharomyces, a second route exists between lanosterol and fecosterol, via the methylation of lanosterol to eburicol by erg6, followed by C14-demethylation by erg11/cyp1 and C4-demethylation by the demethylation complex erg25-erg26-erg27. This is Delta(7)-sterol 5(6)-desaturase erg31 from Schizosaccharomyces pombe (strain 972 / ATCC 24843) (Fission yeast).